Consider the following 257-residue polypeptide: Distal membrane-arm assembly complex protein 2 (257 aa).

Position 253 is a phosphoserine (Ser253).

This sequence belongs to the ATP synthase subunit s family. In terms of assembly, interacts with incompletely assembled mitochondrial NADH:ubiquinone oxidoreductase complex (complex I).

Its subcellular location is the mitochondrion. Its function is as follows. Required for the assembly of the mitochondrial NADH:ubiquinone oxidoreductase complex (complex I). Involved in the assembly of the distal region of complex I. The polypeptide is Distal membrane-arm assembly complex protein 2 (Homo sapiens (Human)).